Consider the following 503-residue polypeptide: WD repeat-containing protein 55 homolog (503 aa).

Positions 1 to 131 (MHTHNNFKTP…DSAAFDLDDL (131 aa)) are disordered. Acidic residues-rich tracts occupy residues 12–23 (DADELDDLDDDM) and 37–56 (VGEDESDSDIDEHDLADMEA). Positions 59–76 (PNQNADENESISSDSSFD) are enriched in polar residues. The segment covering 78 to 96 (NAEDSSDSDDSMLEEDEAE) has biased composition (acidic residues). WD repeat units follow at residues 157–196 (KLEDFITDVCFHPDRDIIALATIIGDVHLYEYGNEGNKLL), 201–242 (VHSK…KLYE), 244–282 (AHDDAINKLHVLDENLFATGDDAGTVKLWDLRTKNPIFE), 285–324 (EVEDQITQMITNDQKKLLLATSADGYLTTFNIAARKLYVQ), 327–366 (PYEEELNCMGIYRGSSKLVVGTSKGKLYSYNWGYFGYHCD), and 411–450 (QHNMPIESLDINTSGELLASSSHNNDVRFWNVKYFEDFGD). The interval 483–503 (TKEDEDNADNNDAAAGPSNSA) is disordered.

The protein belongs to the WD repeat WDR55 family.

This Drosophila pseudoobscura pseudoobscura (Fruit fly) protein is WD repeat-containing protein 55 homolog.